We begin with the raw amino-acid sequence, 91 residues long: Small ribosomal subunit protein uS19 (91 aa).

This sequence belongs to the universal ribosomal protein uS19 family.

Its function is as follows. Protein S19 forms a complex with S13 that binds strongly to the 16S ribosomal RNA. This chain is Small ribosomal subunit protein uS19, found in Syntrophotalea carbinolica (strain DSM 2380 / NBRC 103641 / GraBd1) (Pelobacter carbinolicus).